Here is a 139-residue protein sequence, read N- to C-terminus: Large-conductance mechanosensitive channel (139 aa).

Transmembrane regions (helical) follow at residues 16-36 (VIDLAVGVIIGAAFNGIVKSL) and 79-99 (GAFVNTVIQFFIVATVVFLLV).

It belongs to the MscL family. In terms of assembly, homopentamer.

The protein resides in the cell inner membrane. Functionally, channel that opens in response to stretch forces in the membrane lipid bilayer. May participate in the regulation of osmotic pressure changes within the cell. The protein is Large-conductance mechanosensitive channel of Caulobacter vibrioides (strain ATCC 19089 / CIP 103742 / CB 15) (Caulobacter crescentus).